Reading from the N-terminus, the 386-residue chain is WD repeat-containing protein 89 (386 aa).

WD repeat units follow at residues 21–65 (KEPT…VIRE), 68–106 (GYPG…GKPV), 111–155 (GYPS…QDLS), 167–207 (THSD…EDDA), 213–253 (NSVS…TDEP), and 318–357 (GHAA…KTFT).

This is WD repeat-containing protein 89 (WDR89) from Bos taurus (Bovine).